The following is a 379-amino-acid chain: Cytochrome b (379 aa).

4 consecutive transmembrane segments (helical) span residues 34–54 (YGSLLGLCLVIQVLTGLFLSM), 78–99 (WLLRSIHANGASMFFLFIYLHA), 114–134 (WNIGVILFLLTMATAFMGYVL), and 179–199 (FFAFHFILPFAIMGATILHIM). Heme b-binding residues include H84 and H98. Residues H183 and H197 each coordinate heme b. H202 lines the a ubiquinone pocket. The next 4 membrane-spanning stretches (helical) occupy residues 227–247 (IKDTLGYTLAISALSLMVLFE), 289–309 (LGGVMALFAAIVILFIPPLTS), 321–341 (LNKTMFWGLVASWAILTWIGG), and 349–369 (IIIGQVFTSLYFIYFISSPTI).

It belongs to the cytochrome b family. In terms of assembly, the main subunits of complex b-c1 are: cytochrome b, cytochrome c1 and the Rieske protein. Requires heme b as cofactor.

Its subcellular location is the mitochondrion inner membrane. Functionally, component of the ubiquinol-cytochrome c reductase complex (complex III or cytochrome b-c1 complex) that is part of the mitochondrial respiratory chain. The b-c1 complex mediates electron transfer from ubiquinol to cytochrome c. Contributes to the generation of a proton gradient across the mitochondrial membrane that is then used for ATP synthesis. The protein is Cytochrome b (MT-CYB) of Lumbricus terrestris (Common earthworm).